Here is a 365-residue protein sequence, read N- to C-terminus: MSGNTIGKLFTITTAGESHGEALIGIVDGCPPRLALTEADLQGDLDLRKPGTSCHTSQRHEEDLVKILSGTFEGKTTGTTIALIIQNTDQRSKDYGNIKDTFRPGHADYTYDQKYGFRDYRGGGRSSARETAMRVACGGIAKKYLKQVYGIEIKGYLSQLGPIKAENFDWFEVHNNPFFCPDASKVRTLEEYMDALRKSGDSVGARINITANNMPVGLGEPIFDRLEADIAHGMMSINAVKGVEIGAGFKAITQKGTEHRDAITLSGFKSNHAGGVLGGISSGQDILVSIALKPTSSLRLPIESIDKNGEPIEVVTKGRHDPCVGIRATPIAEAMLAITIMDHVMRHRAQNSNVASITPIIPASI.

Residue Arg48 coordinates NADP(+). FMN contacts are provided by residues 125-127 (RSS), 238-239 (NA), Gly278, 293-297 (KPTSS), and Arg319.

Belongs to the chorismate synthase family. In terms of assembly, homotetramer. Requires FMNH2 as cofactor.

The catalysed reaction is 5-O-(1-carboxyvinyl)-3-phosphoshikimate = chorismate + phosphate. It functions in the pathway metabolic intermediate biosynthesis; chorismate biosynthesis; chorismate from D-erythrose 4-phosphate and phosphoenolpyruvate: step 7/7. Functionally, catalyzes the anti-1,4-elimination of the C-3 phosphate and the C-6 proR hydrogen from 5-enolpyruvylshikimate-3-phosphate (EPSP) to yield chorismate, which is the branch point compound that serves as the starting substrate for the three terminal pathways of aromatic amino acid biosynthesis. This reaction introduces a second double bond into the aromatic ring system. In Ruthia magnifica subsp. Calyptogena magnifica, this protein is Chorismate synthase.